The primary structure comprises 328 residues: Ribose-phosphate pyrophosphokinase (328 aa).

ATP contacts are provided by residues 39 to 41 (DGE) and 98 to 99 (RQ). 2 residues coordinate Mg(2+): H132 and D172. K195 is an active-site residue. D-ribose 5-phosphate is bound by residues R197, D221, and 225-229 (DTGGT).

Belongs to the ribose-phosphate pyrophosphokinase family. Class I subfamily. Homohexamer. Mg(2+) serves as cofactor.

It localises to the cytoplasm. It carries out the reaction D-ribose 5-phosphate + ATP = 5-phospho-alpha-D-ribose 1-diphosphate + AMP + H(+). The protein operates within metabolic intermediate biosynthesis; 5-phospho-alpha-D-ribose 1-diphosphate biosynthesis; 5-phospho-alpha-D-ribose 1-diphosphate from D-ribose 5-phosphate (route I): step 1/1. In terms of biological role, involved in the biosynthesis of the central metabolite phospho-alpha-D-ribosyl-1-pyrophosphate (PRPP) via the transfer of pyrophosphoryl group from ATP to 1-hydroxyl of ribose-5-phosphate (Rib-5-P). This chain is Ribose-phosphate pyrophosphokinase, found in Mycoplasma pneumoniae (strain ATCC 29342 / M129 / Subtype 1) (Mycoplasmoides pneumoniae).